The chain runs to 208 residues: Ribosomal RNA small subunit methyltransferase J (208 aa).

S-adenosyl-L-methionine is bound by residues 54 to 55 (RD), 70 to 71 (ER), and Asp-122.

The protein belongs to the methyltransferase superfamily. RsmJ family.

Its subcellular location is the cytoplasm. It carries out the reaction guanosine(1516) in 16S rRNA + S-adenosyl-L-methionine = N(2)-methylguanosine(1516) in 16S rRNA + S-adenosyl-L-homocysteine + H(+). Its function is as follows. Specifically methylates the guanosine in position 1516 of 16S rRNA. The sequence is that of Ribosomal RNA small subunit methyltransferase J from Agrobacterium fabrum (strain C58 / ATCC 33970) (Agrobacterium tumefaciens (strain C58)).